A 243-amino-acid chain; its full sequence is Bidirectional sugar transporter SWEET2a (243 aa).

The signal sequence occupies residues 1–15 (MMNALGLSVAATSTG). Over 16 to 24 (SPFHDVCCY) the chain is Extracellular. Residues 25–45 (GAGIAGNIFALVLFISPLPTF) form a helical membrane-spanning segment. Residues 27 to 112 (GIAGNIFALV…ATFIAFADAK (86 aa)) enclose the MtN3/slv 1 domain. Residues 46 to 56 (KRIVRNGSTEQ) are Cytoplasmic-facing. Residues 57–79 (FSAMPYIYSLLNCLICLWYGLPF) form a helical membrane-spanning segment. Over 80–90 (VSYGVVLVATV) the chain is Extracellular. The chain crosses the membrane as a helical span at residues 91–111 (NSIGALFQLAYTATFIAFADA). Residues 112–118 (KNRVKVS) are Cytoplasmic-facing. A helical transmembrane segment spans residues 119–139 (SLLVMVFGVFALIVYVSLALF). Topologically, residues 140–146 (DHQTRQL) are extracellular. A helical membrane pass occupies residues 147–167 (FVGYLSVASLIFMFASPLSII). The MtN3/slv 2 domain occupies 147–229 (FVGYLSVASL…QLVLYGYFRK (83 aa)). The Cytoplasmic portion of the chain corresponds to 168 to 180 (NLVIRTKSVEYMP). A helical membrane pass occupies residues 181 to 201 (FYLSLSMFLMSVSFFAYGVLL). Residues 202-203 (HD) are Extracellular-facing. A helical transmembrane segment spans residues 204 to 224 (FFIYIPNGIGTVLGVIQLVLY). Residues 225-243 (GYFRKGSREDSLPLLVTHT) lie on the Cytoplasmic side of the membrane.

It belongs to the SWEET sugar transporter family. In terms of assembly, forms homooligomers and/or heterooligomers.

Its subcellular location is the cell membrane. Its function is as follows. Mediates both low-affinity uptake and efflux of sugar across the plasma membrane. This is Bidirectional sugar transporter SWEET2a (SWEET2A) from Oryza sativa subsp. indica (Rice).